The sequence spans 188 residues: Peptidyl-tRNA hydrolase (188 aa).

Phe-15 is a tRNA binding site. His-20 acts as the Proton acceptor in catalysis. Positions 64, 66, and 112 each coordinate tRNA.

It belongs to the PTH family. As to quaternary structure, monomer.

It is found in the cytoplasm. It catalyses the reaction an N-acyl-L-alpha-aminoacyl-tRNA + H2O = an N-acyl-L-amino acid + a tRNA + H(+). Functionally, hydrolyzes ribosome-free peptidyl-tRNAs (with 1 or more amino acids incorporated), which drop off the ribosome during protein synthesis, or as a result of ribosome stalling. Its function is as follows. Catalyzes the release of premature peptidyl moieties from peptidyl-tRNA molecules trapped in stalled 50S ribosomal subunits, and thus maintains levels of free tRNAs and 50S ribosomes. This Borrelia recurrentis (strain A1) protein is Peptidyl-tRNA hydrolase.